Reading from the N-terminus, the 88-residue chain is UPF0297 protein SPCG_0205 (88 aa).

This sequence belongs to the UPF0297 family.

This chain is UPF0297 protein SPCG_0205, found in Streptococcus pneumoniae (strain CGSP14).